Here is a 402-residue protein sequence, read N- to C-terminus: S-adenosylmethionine synthase (402 aa).

ATP is bound at residue His16. Asp18 contributes to the Mg(2+) binding site. Glu44 provides a ligand contact to K(+). 2 residues coordinate L-methionine: Glu57 and Gln103. A flexible loop region spans residues 103–113; the sequence is QSPDIAQGVDT. Residues 178-180, 249-250, Asp258, 264-265, Ala281, and Lys285 contribute to the ATP site; these read DGK, KF, and RK. Asp258 contributes to the L-methionine binding site. Lys289 is an L-methionine binding site.

The protein belongs to the AdoMet synthase family. In terms of assembly, homotetramer; dimer of dimers. Mg(2+) serves as cofactor. Requires K(+) as cofactor.

Its subcellular location is the cytoplasm. It catalyses the reaction L-methionine + ATP + H2O = S-adenosyl-L-methionine + phosphate + diphosphate. The protein operates within amino-acid biosynthesis; S-adenosyl-L-methionine biosynthesis; S-adenosyl-L-methionine from L-methionine: step 1/1. Its function is as follows. Catalyzes the formation of S-adenosylmethionine (AdoMet) from methionine and ATP. The overall synthetic reaction is composed of two sequential steps, AdoMet formation and the subsequent tripolyphosphate hydrolysis which occurs prior to release of AdoMet from the enzyme. The chain is S-adenosylmethionine synthase from Mycolicibacterium gilvum (strain PYR-GCK) (Mycobacterium gilvum (strain PYR-GCK)).